A 452-amino-acid polypeptide reads, in one-letter code: Probable ECA polymerase (452 aa).

11 helical membrane passes run 6 to 26 (FSGL…LTWF), 37 to 57 (VFFS…TSVL), 63 to 83 (VGVA…CFYG), 118 to 138 (VILM…NGFL), 155 to 175 (GVAL…VYFL), 181 to 201 (AWLF…MIVG), 207 to 227 (IIIA…ISLW), 228 to 248 (MLAA…LKRY), 341 to 361 (LVVM…GMII), 378 to 398 (YKAA…IVLA), and 410 to 430 (VFFL…FWLF).

It belongs to the WzyE family. Probably part of a complex composed of WzxE, WzyE and WzzE.

Its subcellular location is the cell inner membrane. Its pathway is bacterial outer membrane biogenesis; enterobacterial common antigen biosynthesis. Its function is as follows. Probably involved in the polymerization of enterobacterial common antigen (ECA) trisaccharide repeat units. This Salmonella newport (strain SL254) protein is Probable ECA polymerase.